We begin with the raw amino-acid sequence, 181 residues long: Ribulose bisphosphate carboxylase small subunit, chloroplastic 1 (181 aa).

Residues 1–57 (MASSIVSSAAVATRSNVAQASMVAPFTGLKSAASFPVTKKNNNVDITSLASNGGRVR) constitute a chloroplast transit peptide.

The protein belongs to the RuBisCO small chain family. In terms of assembly, heterohexadecamer of 8 large and 8 small subunits.

Its subcellular location is the plastid. It is found in the chloroplast. RuBisCO catalyzes two reactions: the carboxylation of D-ribulose 1,5-bisphosphate, the primary event in carbon dioxide fixation, as well as the oxidative fragmentation of the pentose substrate. Both reactions occur simultaneously and in competition at the same active site. Although the small subunit is not catalytic it is essential for maximal activity. The sequence is that of Ribulose bisphosphate carboxylase small subunit, chloroplastic 1 from Solanum tuberosum (Potato).